The primary structure comprises 1256 residues: MKRKHYFEFNHPFNPCPFEVFCWGTWKAVEYLRIENGTMTMRLLENGQVLDDIKPFQRLRIRSRKATLIDCTSFLRPGIDVCVLYQRDEETPEPVWVDARVLSIERKPHESECLCTFHVSVYIDQGCIGLEKHRMNKVPVLVGLNEIAILQKFCKEQSLDRYYRWRYSEDCSSLVKTRLNLGKFLPDLTWLLVTSVLKNIVFQIRTVHEKMVYQIVTDEDCEGSSSSLSAMNITVEDGVVMSKVVLFNPAEDTCQDSDVKEEIEEEVMELRRSKRRSGRPERYGDSEIQPDSKDGWVRMMPYRYNIWNVSSDDDDEEEDCEDDKDTDDDLYLPLSHLLRKKGSKKGFSKDKQREIVLVDKTERKKRKKTEGFSRSCELSVIPFTPVFEPIPLEQFGLNANSLCGGVSGNLMDEIDKYRSKAAKYGKKKKKKIEMEEMESDLGWNGPIGNVVHKRNGPHSRIRSVSRETGVSEEPQIYKKRTLSAGAYNKLIDSYMSRIDSTIAAKDKATNVVEQWQGLKNPASFSIEAEERLSEEEEDDGETSENEILWREMELCLASSYILDDHEVRVDNEAFHKATCDCEHDYELNEEIGMCCRLCGHVGTEIKHVSAPFARHKKWTTETKQINEDDINTTIVNQDGVESHTFTIPVASSDMPSAEESDNVWSLIPQLKRKLHLHQKKAFEFLWKNLAGSVVPAMMDPSSDKIGGCVVSHTPGAGKTFLIIAFLASYLKIFPGKRPLVLAPKTTLYTWYKEFIKWEIPVPVHLLHGRRTYCMSKEKTIQFEGIPKPSQDVMHVLDCLDKIQKWHAQPSVLVMGYTSFLTLMREDSKFAHRKYMAKVLRESPGLLVLDEGHNPRSTKSRLRKALMKVDTDLRILLSGTLFQNNFCEYFNTLCLARPKFVHEVLVELDKKFQTNQAEQKAPHLLENRARKFFLDIIAKKIDTKVGDERLQGLNMLRNMTSGFIDNYEGSGSGSGDVLPGLQIYTLLMNSTDVQHKSLTKLQNIMSTYHGYPLELELLITLAAIHPWLVKTTTCCAKFFNPQELLEIEKLKHDAKKGSKVMFVLNLVFRVVKREKILIFCHNIAPIRLFLELFENVFRWKRGRELLTLTGDLELFERGRVIDKFEEPGGQSRVLLASITACAEGISLTAASRVIMLDSEWNPSKTKQAIARAFRPGQQKVVYVYQLLSRGTLEEDKYRRTTWKEWVSSMIFSEEFVEDPSQWQAEKIEDDVLREIVEEDKVKSFHMIMKNEKASTGG.

2 disordered regions span residues 269–290 and 448–467; these read ELRRSKRRSGRPERYGDSEIQP and GNVVHKRNGPHSRIRSVSRE. Residues 278 to 290 are compositionally biased toward basic and acidic residues; that stretch reads GRPERYGDSEIQP. Basic residues predominate over residues 451–463; the sequence is VHKRNGPHSRIRS. One can recognise a Helicase ATP-binding domain in the interval 699 to 898; sequence DPSSDKIGGC…FNTLCLARPK (200 aa). 712–719 provides a ligand contact to ATP; sequence HTPGAGKT. The DEAH box signature appears at 849–852; that stretch reads DEGH. One can recognise a Helicase C-terminal domain in the interval 1061–1222; that stretch reads FVLNLVFRVV…EFVEDPSQWQ (162 aa).

It belongs to the helicase family. In terms of assembly, interacts with NRPD1, NRPD3 and SHH1.

It localises to the nucleus. The protein resides in the nucleoplasm. It is found in the nucleolus. Its function is as follows. Probable chromatin remodeling factor. Required for the initial establishment of DNA methylation and for accumulation of 24-nt siRNAs. May act on RNA templates by remodeling ribonucleoprotein structures and thereby influencing the availability of the RNA to polymerases. This chain is SNF2 domain-containing protein CLASSY 1 (CLSY1), found in Arabidopsis thaliana (Mouse-ear cress).